The chain runs to 103 residues: Large ribosomal subunit protein bL21 (103 aa).

It belongs to the bacterial ribosomal protein bL21 family. As to quaternary structure, part of the 50S ribosomal subunit. Contacts protein L20.

Functionally, this protein binds to 23S rRNA in the presence of protein L20. The protein is Large ribosomal subunit protein bL21 of Pectobacterium carotovorum subsp. carotovorum (strain PC1).